Reading from the N-terminus, the 446-residue chain is Delta(8)-fatty-acid desaturase (446 aa).

One can recognise a Cytochrome b5 heme-binding domain in the interval 5–89 (KKYISVGELE…LEDYLVSEIS (85 aa)). Heme is bound by residues His40 and His63. The next 2 membrane-spanning stretches (helical) occupy residues 112 to 132 (VIYC…GVLC) and 136 to 156 (LWVH…AAYL). The Histidine box-1 signature appears at 158–162 (HDSGH). Transmembrane regions (helical) follow at residues 174–195 (FAQV…KWTH), 253–273 (IYLV…LLLF), 282–302 (ALNI…VSCL), and 309–329 (VLFV…FTLN). The Histidine box-2 signature appears at 195-199 (HNAHH). Residues 372 to 376 (QLEHH) carry the Histidine box-3 motif.

The protein belongs to the fatty acid desaturase type 1 family. It depends on Fe cation as a cofactor. As to expression, expressed only in young leaves.

The protein resides in the membrane. The enzyme catalyses an N-acyl-(4R)-4-hydroxysphinganine + 2 Fe(II)-[cytochrome b5] + O2 + 2 H(+) = a (4R,8E)-4-hydroxysphingenine ceramide + 2 Fe(III)-[cytochrome b5] + 2 H2O. It catalyses the reaction an N-acyl-(4R)-4-hydroxysphinganine + 2 Fe(II)-[cytochrome b5] + O2 + 2 H(+) = a (4R,8Z)-4-hydroxysphing-8-enine ceramide + 2 Fe(III)-[cytochrome b5] + 2 H2O. Its function is as follows. Plays a major role as delta(8)-fatty-acid desaturase which introduces a double bond at the 8-position in the long-chain base (LCB) of ceramides with or without a hydroxy group at the 4-position. The enzyme produces both the 8E and 8Z isomers (in a 4:1 ratio). This structural modification contributes to the quantitative partitioning of ceramides between the two major sphingolipid classes, glucosylceramides and glycosylinositolphosphoryl ceramides. Sphingolipids are important membrane components involved in environmental stress responses, such as resistance to chilling, and act as cell signaling molecules. In Borago officinalis (Bourrache), this protein is Delta(8)-fatty-acid desaturase (sld1).